We begin with the raw amino-acid sequence, 306 residues long: Ribonuclease Z (306 aa).

7 residues coordinate Zn(2+): His-63, His-65, Asp-67, His-68, His-141, Asp-208, and His-266. The active-site Proton acceptor is Asp-67.

The protein belongs to the RNase Z family. In terms of assembly, homodimer. The cofactor is Zn(2+).

The enzyme catalyses Endonucleolytic cleavage of RNA, removing extra 3' nucleotides from tRNA precursor, generating 3' termini of tRNAs. A 3'-hydroxy group is left at the tRNA terminus and a 5'-phosphoryl group is left at the trailer molecule.. Its function is as follows. Zinc phosphodiesterase, which displays some tRNA 3'-processing endonuclease activity. Probably involved in tRNA maturation, by removing a 3'-trailer from precursor tRNA. The protein is Ribonuclease Z of Chlamydia abortus (strain DSM 27085 / S26/3) (Chlamydophila abortus).